The primary structure comprises 379 residues: Cytokine receptor common subunit gamma (379 aa).

Positions 1-22 (MLKPPLPLRSLLFLQLPLLGVG) are cleaved as a signal peptide. Residues 23-269 (LNPKFLTPSG…ENIENPENPS (247 aa)) are Extracellular-facing. The cysteines at positions 68 and 78 are disulfide-linked. N-linked (GlcNAc...) asparagine glycosylation is found at Asn-77, Asn-81, and Asn-90. Residues Cys-109 and Cys-122 are joined by a disulfide bond. The Fibronectin type-III domain occupies 163–260 (APENLTLRNL…IHWGSNTSKE (98 aa)). Residues Asn-166 and Asn-171 are each glycosylated (N-linked (GlcNAc...) asparagine). Residues 244-248 (WSDWS) carry the WSXWS motif motif. A helical transmembrane segment spans residues 270-290 (LFALEAVLIPLGSMGLIVSLI). The Cytoplasmic segment spans residues 291-379 (CVYCWLERTM…PPCYTLKPEP (89 aa)). The Box 1 motif motif lies at 299 to 307 (TMPRIPTLK). Thr-305 carries the post-translational modification Phosphothreonine. The segment at 349–370 (PPKGGEGPGGSPCSQHSPYWAP) is disordered.

Belongs to the type I cytokine receptor family. Type 5 subfamily. The gamma subunit is common to the IL2, IL4, IL7, IL15, IL21 and probably also the IL13 receptors. Interacts with SHB upon interleukin stimulation.

It is found in the cell membrane. The protein resides in the cell surface. Its function is as follows. Common subunit for the receptors for a variety of interleukins. Probably in association with IL15RA, involved in the stimulation of neutrophil phagocytosis by IL15. In Bos taurus (Bovine), this protein is Cytokine receptor common subunit gamma (IL2RG).